Here is a 346-residue protein sequence, read N- to C-terminus: Autophagy-related protein 3 (346 aa).

Residues 85–161 (DFAGDAGHEE…DDDDEAIIRA (77 aa)) form a flexible region region. Cys-238 acts as the Glycyl thioester intermediate in catalysis. The tract at residues 242 to 322 (SVMKTLLDRA…DQEVAIRVDQ (81 aa)) is handle region.

Belongs to the ATG3 family. In terms of assembly, monomer. Interacts with apg-6/atg8 through an intermediate thioester bond through the C-terminal Gly of apg-6/atg8. Also interacts with the 40 amino acid C-terminal region of the E1-like apg-5/atg7 enzyme. Also interacts with the atg12-apg-4/atg5 conjugate.

Its subcellular location is the cytoplasm. Functionally, E2 conjugating enzyme required for the cytoplasm to vacuole transport (Cvt) and autophagy. Required for selective autophagic degradation of the nucleus (nucleophagy) as well as for mitophagy which contributes to regulate mitochondrial quantity and quality by eliminating the mitochondria to a basal level to fulfill cellular energy requirements and preventing excess ROS production. Responsible for the E2-like covalent binding of phosphatidylethanolamine to the C-terminal Gly of apg-6/atg8. The atg12-apg-4/atg5 conjugate plays a role of an E3 and promotes the transfer of apg-6/atg8 from apg-3/atg3 to phosphatidylethanolamine (PE). This step is required for the membrane association of apg-6/atg8. The formation of the apg-6/atg8-phosphatidylethanolamine conjugate is essential for autophagy and for the cytoplasm to vacuole transport (Cvt). The apg-6/atg8-PE conjugate mediates tethering between adjacent membranes and stimulates membrane hemifusion, leading to expansion of the autophagosomal membrane during autophagy. This chain is Autophagy-related protein 3 (apg-3), found in Neurospora crassa (strain ATCC 24698 / 74-OR23-1A / CBS 708.71 / DSM 1257 / FGSC 987).